The chain runs to 293 residues: Small ribosomal subunit biogenesis GTPase RsgA (293 aa).

The CP-type G domain maps to 63–223; it reads KNWLVRPPIA…VADTPGFSAL (161 aa). GTP contacts are provided by residues 112–115 and 166–174; these read NKMD and GQSGVGKSS. 4 residues coordinate Zn(2+): Cys-247, Cys-252, His-254, and Cys-260.

This sequence belongs to the TRAFAC class YlqF/YawG GTPase family. RsgA subfamily. In terms of assembly, monomer. Associates with 30S ribosomal subunit, binds 16S rRNA. Zn(2+) serves as cofactor.

It localises to the cytoplasm. In terms of biological role, one of several proteins that assist in the late maturation steps of the functional core of the 30S ribosomal subunit. Helps release RbfA from mature subunits. May play a role in the assembly of ribosomal proteins into the subunit. Circularly permuted GTPase that catalyzes slow GTP hydrolysis, GTPase activity is stimulated by the 30S ribosomal subunit. This chain is Small ribosomal subunit biogenesis GTPase RsgA, found in Geobacillus sp. (strain WCH70).